We begin with the raw amino-acid sequence, 442 residues long: tRNA-2-methylthio-N(6)-dimethylallyladenosine synthase (442 aa).

The region spanning Lys-2–Thr-120 is the MTTase N-terminal domain. Cys-11, Cys-49, Cys-83, Cys-157, Cys-161, and Cys-164 together coordinate [4Fe-4S] cluster. A Radical SAM core domain is found at Arg-143–Arg-375. The 64-residue stretch at Gln-378–Glu-441 folds into the TRAM domain.

It belongs to the methylthiotransferase family. MiaB subfamily. As to quaternary structure, monomer. [4Fe-4S] cluster serves as cofactor.

The protein localises to the cytoplasm. The enzyme catalyses N(6)-dimethylallyladenosine(37) in tRNA + (sulfur carrier)-SH + AH2 + 2 S-adenosyl-L-methionine = 2-methylsulfanyl-N(6)-dimethylallyladenosine(37) in tRNA + (sulfur carrier)-H + 5'-deoxyadenosine + L-methionine + A + S-adenosyl-L-homocysteine + 2 H(+). Catalyzes the methylthiolation of N6-(dimethylallyl)adenosine (i(6)A), leading to the formation of 2-methylthio-N6-(dimethylallyl)adenosine (ms(2)i(6)A) at position 37 in tRNAs that read codons beginning with uridine. The protein is tRNA-2-methylthio-N(6)-dimethylallyladenosine synthase of Neisseria gonorrhoeae (strain ATCC 700825 / FA 1090).